Reading from the N-terminus, the 95-residue chain is Co-chaperonin GroES (95 aa).

Belongs to the GroES chaperonin family. In terms of assembly, heptamer of 7 subunits arranged in a ring. Interacts with the chaperonin GroEL.

The protein resides in the cytoplasm. Functionally, together with the chaperonin GroEL, plays an essential role in assisting protein folding. The GroEL-GroES system forms a nano-cage that allows encapsulation of the non-native substrate proteins and provides a physical environment optimized to promote and accelerate protein folding. GroES binds to the apical surface of the GroEL ring, thereby capping the opening of the GroEL channel. The sequence is that of Co-chaperonin GroES from Desulfosudis oleivorans (strain DSM 6200 / JCM 39069 / Hxd3) (Desulfococcus oleovorans).